Consider the following 518-residue polypeptide: Protein nucleotidyltransferase YdiU (518 aa).

Residues G99, G101, R102, K122, D134, G135, R192, and R199 each coordinate ATP. D270 functions as the Proton acceptor in the catalytic mechanism. Mg(2+) contacts are provided by N271 and D280. ATP is bound at residue D280.

The protein belongs to the SELO family. The cofactor is Mg(2+). Mn(2+) is required as a cofactor.

It catalyses the reaction L-seryl-[protein] + ATP = 3-O-(5'-adenylyl)-L-seryl-[protein] + diphosphate. The enzyme catalyses L-threonyl-[protein] + ATP = 3-O-(5'-adenylyl)-L-threonyl-[protein] + diphosphate. The catalysed reaction is L-tyrosyl-[protein] + ATP = O-(5'-adenylyl)-L-tyrosyl-[protein] + diphosphate. It carries out the reaction L-histidyl-[protein] + UTP = N(tele)-(5'-uridylyl)-L-histidyl-[protein] + diphosphate. It catalyses the reaction L-seryl-[protein] + UTP = O-(5'-uridylyl)-L-seryl-[protein] + diphosphate. The enzyme catalyses L-tyrosyl-[protein] + UTP = O-(5'-uridylyl)-L-tyrosyl-[protein] + diphosphate. Functionally, nucleotidyltransferase involved in the post-translational modification of proteins. It can catalyze the addition of adenosine monophosphate (AMP) or uridine monophosphate (UMP) to a protein, resulting in modifications known as AMPylation and UMPylation. The chain is Protein nucleotidyltransferase YdiU from Methylobacillus flagellatus (strain ATCC 51484 / DSM 6875 / VKM B-1610 / KT).